Reading from the N-terminus, the 1192-residue chain is Probable ATP-dependent RNA helicase kurz (1192 aa).

The tract at residues 170-214 (ELQAKRKNPNVISVEEDDEDSSSSDEDDEEAPAQSAPIAIPTPVS) is disordered. The segment covering 183-200 (VEEDDEDSSSSDEDDEEA) has biased composition (acidic residues). Residues 270–436 (METINENPIV…TRLFKIPPPL (167 aa)) form the Helicase ATP-binding domain. ATP is bound at residue 283–290 (GETGSGKT). A DEAH box motif is present at residues 379-382 (DEAH). The disordered stretch occupies residues 504-529 (APTKDVAKNGKVSEEEKEETIDDAAS). A compositionally biased stretch (basic and acidic residues) spans 505 to 517 (PTKDVAKNGKVSE). Residue Ser529 is modified to Phosphoserine. Thr530 is modified (phosphothreonine). A Helicase C-terminal domain is found at 540–746 (DMKRVIRNIR…DLMLQMRCMG (207 aa)). A compositionally biased stretch (basic and acidic residues) spans 567-583 (DDYKLPGDDTEADMHEQ). A disordered region spans residues 567–612 (DDYKLPGDDTEADMHEQPDEDDEQEGLEEDNDDELGLEDESGMGSG). The segment covering 584 to 607 (PDEDDEQEGLEEDNDDELGLEDES) has biased composition (acidic residues).

This sequence belongs to the DEAD box helicase family. DEAH subfamily.

The catalysed reaction is ATP + H2O = ADP + phosphate + H(+). The sequence is that of Probable ATP-dependent RNA helicase kurz (kz) from Drosophila melanogaster (Fruit fly).